The sequence spans 333 residues: Photosystem II assembly lipoprotein Ycf48 (333 aa).

Residues Met-1–Gly-23 form the signal peptide. The N-palmitoyl cysteine moiety is linked to residue Cys-24. Cys-24 is lipidated: S-diacylglycerol cysteine.

Belongs to the Ycf48 family. As to quaternary structure, part of early PSII assembly complexes which includes D1 (psbA) and PsbI; not found in mature PSII. Binds to the lumenal side of PSII complexes. Interacts with YidC.

Its subcellular location is the cellular thylakoid membrane. Functionally, a factor required for optimal assembly of photosystem II (PSII), acting in the early stages of PSII assembly. Also plays a role in replacement of photodamaged D1 (psbA). Assists YidC in synthesis of chlorophyll-binding proteins. This Synechococcus sp. (strain CC9605) protein is Photosystem II assembly lipoprotein Ycf48.